A 585-amino-acid polypeptide reads, in one-letter code: Zinc finger protein C11D3.17 (585 aa).

2 consecutive C2H2-type zinc fingers follow at residues 31–53 and 59–82; these read FPCDQCAKRFTRHENLTRHKACH and IPCPYCEIKCKRKDLLKRHIQRFH. Phosphothreonine is present on Thr553.

The protein resides in the nucleus. The polypeptide is Zinc finger protein C11D3.17 (Schizosaccharomyces pombe (strain 972 / ATCC 24843) (Fission yeast)).